Here is an 81-residue protein sequence, read N- to C-terminus: Small ribosomal subunit protein bS16 (81 aa).

The protein belongs to the bacterial ribosomal protein bS16 family.

The protein is Small ribosomal subunit protein bS16 of Acetivibrio thermocellus (strain ATCC 27405 / DSM 1237 / JCM 9322 / NBRC 103400 / NCIMB 10682 / NRRL B-4536 / VPI 7372) (Clostridium thermocellum).